The chain runs to 517 residues: Succinyl-CoA:3-ketoacid coenzyme A transferase 2, mitochondrial (517 aa).

Residues 1-39 (MAALRLLASVLGRGVPAGGSGLALSQGCARCFATSPRLR) constitute a mitochondrion transit peptide. E341 functions as the 5-glutamyl coenzyme A thioester intermediate in the catalytic mechanism.

It belongs to the 3-oxoacid CoA-transferase family. Homodimer. Testis specific.

The protein localises to the mitochondrion. It catalyses the reaction a 3-oxo acid + succinyl-CoA = a 3-oxoacyl-CoA + succinate. Its pathway is ketone metabolism; succinyl-CoA degradation; acetoacetyl-CoA from succinyl-CoA: step 1/1. Functionally, key enzyme for ketone body catabolism. Transfers the CoA moiety from succinate to acetoacetate. Formation of the enzyme-CoA intermediate proceeds via an unstable anhydride species formed between the carboxylate groups of the enzyme and substrate. This Homo sapiens (Human) protein is Succinyl-CoA:3-ketoacid coenzyme A transferase 2, mitochondrial (OXCT2).